A 413-amino-acid polypeptide reads, in one-letter code: uncharacterized protein (413 aa).

12 helical membrane-spanning segments follow: residues 42 to 62 (FLGGFSSFSILYCVQSILPVF), 75 to 95 (LSLSAATATMSIGTLFIGPLS), 109 to 129 (LIAAVLTIICSISNNWTVIVF), 133 to 153 (LTGLALSGVVAVAMTYIVEEV), 157 to 179 (SVSFCMGLYISGNTIGGCSGRIL), 191 to 211 (IAFIVIGFFSLMSSCLFLYFL), 238 to 258 (PTLLILFAIGFMLMGSFITIF), 265 to 285 (LMLSPFFLSSSNIGFLSIIYL), 304 to 324 (SSILRIALLLMILGLLMTQYN), 326 to 346 (IFIIILGLVIFSSGFFASHSI), 362 to 382 (ATSLYLFFYYLGSSIFGTFGG), and 383 to 403 (FFWFYLKWIGISSFIIIILIF).

It belongs to the major facilitator superfamily.

The protein localises to the cell membrane. This is an uncharacterized protein from Buchnera aphidicola subsp. Schizaphis graminum (strain Sg).